The primary structure comprises 253 residues: MRILLSNDDGIHAPGIQALAKALREFAEVQVVAPDRNRSGASNSLTLESSLRTFTYPNGDIAVQMGTPTDCVFLGVNALMRPRPDVVVSGINAGPNLGDDVIYSGTVAAAMEGRHLGLPALAVSLNGHEHYETAAAVTCTLLRALAREPLRTGRILNINVPDLPLEEIKGIRVTRCGSRHPADKVIPQDDPRGNTLYWIGPPGEKLDAGPDTDFAAVDEGYVSVTPLHVDLTAHSAQDVVTRWLSSAGVNGQW.

A divalent metal cation is bound by residues D8, D9, S39, and N92.

It belongs to the SurE nucleotidase family. Requires a divalent metal cation as cofactor.

It is found in the cytoplasm. It catalyses the reaction a ribonucleoside 5'-phosphate + H2O = a ribonucleoside + phosphate. The enzyme catalyses a ribonucleoside 3'-phosphate + H2O = a ribonucleoside + phosphate. The catalysed reaction is [phosphate](n) + H2O = [phosphate](n-1) + phosphate + H(+). Nucleotidase with a broad substrate specificity as it can dephosphorylate various ribo- and deoxyribonucleoside 5'-monophosphates and ribonucleoside 3'-monophosphates with highest affinity to 3'-AMP. Also hydrolyzes polyphosphate (exopolyphosphatase activity) with the preference for short-chain-length substrates (P20-25). Might be involved in the regulation of dNTP and NTP pools, and in the turnover of 3'-mononucleotides produced by numerous intracellular RNases (T1, T2, and F) during the degradation of various RNAs. This chain is 5'/3'-nucleotidase SurE, found in Cronobacter sakazakii (strain ATCC BAA-894) (Enterobacter sakazakii).